A 55-amino-acid polypeptide reads, in one-letter code: Large ribosomal subunit protein bL33 (55 aa).

It belongs to the bacterial ribosomal protein bL33 family.

The chain is Large ribosomal subunit protein bL33 from Phenylobacterium zucineum (strain HLK1).